Reading from the N-terminus, the 144-residue chain is Endoribonuclease YbeY (144 aa).

3 residues coordinate Zn(2+): H105, H109, and D115.

The protein belongs to the endoribonuclease YbeY family. The cofactor is Zn(2+).

Its subcellular location is the cytoplasm. Single strand-specific metallo-endoribonuclease involved in late-stage 70S ribosome quality control and in maturation of the 3' terminus of the 16S rRNA. The sequence is that of Endoribonuclease YbeY from Chlorobium limicola (strain DSM 245 / NBRC 103803 / 6330).